The following is a 480-amino-acid chain: Protein nucleotidyltransferase YdiU (480 aa).

ATP contacts are provided by G86, G88, R89, K109, D121, G122, R172, and R179. Residue D248 is the Proton acceptor of the active site. The Mg(2+) site is built by N249 and D258. D258 lines the ATP pocket.

Belongs to the SELO family. It depends on Mg(2+) as a cofactor. Mn(2+) serves as cofactor.

The catalysed reaction is L-seryl-[protein] + ATP = 3-O-(5'-adenylyl)-L-seryl-[protein] + diphosphate. The enzyme catalyses L-threonyl-[protein] + ATP = 3-O-(5'-adenylyl)-L-threonyl-[protein] + diphosphate. It catalyses the reaction L-tyrosyl-[protein] + ATP = O-(5'-adenylyl)-L-tyrosyl-[protein] + diphosphate. It carries out the reaction L-histidyl-[protein] + UTP = N(tele)-(5'-uridylyl)-L-histidyl-[protein] + diphosphate. The catalysed reaction is L-seryl-[protein] + UTP = O-(5'-uridylyl)-L-seryl-[protein] + diphosphate. The enzyme catalyses L-tyrosyl-[protein] + UTP = O-(5'-uridylyl)-L-tyrosyl-[protein] + diphosphate. In terms of biological role, nucleotidyltransferase involved in the post-translational modification of proteins. It can catalyze the addition of adenosine monophosphate (AMP) or uridine monophosphate (UMP) to a protein, resulting in modifications known as AMPylation and UMPylation. The protein is Protein nucleotidyltransferase YdiU of Salmonella enteritidis PT4 (strain P125109).